Here is a 453-residue protein sequence, read N- to C-terminus: Tyrosine-protein phosphatase non-receptor type 18 (453 aa).

The Tyrosine-protein phosphatase domain maps to 26–291; the sequence is LAREFSDIKA…RFLYHTVAQL (266 aa). Residues aspartate 197, 229–235, and glutamine 276 contribute to the substrate site; that span reads CSAGCGR. The active-site Phosphocysteine intermediate is cysteine 229. Phosphotyrosine occurs at positions 381 and 419. The interval 384 to 453 is disordered; it reads VAPRAQRPVA…RDPPAEWTRV (70 aa). Basic and acidic residues predominate over residues 442–453; that stretch reads GPRDPPAEWTRV.

This sequence belongs to the protein-tyrosine phosphatase family. Non-receptor class 4 subfamily. Interacts with PSTPIP1. As to expression, highest expression in bone marrow. Also expressed in kidney, lung, ovary, spleen, thymus and lymph node.

The protein localises to the nucleus. It localises to the cytoplasm. It catalyses the reaction O-phospho-L-tyrosyl-[protein] + H2O = L-tyrosyl-[protein] + phosphate. Functionally, may be involved in growth and differentiation of hematopoietic cells. The chain is Tyrosine-protein phosphatase non-receptor type 18 (Ptpn18) from Mus musculus (Mouse).